The sequence spans 482 residues: Glutamyl-tRNA(Gln) amidotransferase subunit A (482 aa).

Residues lysine 80 and serine 159 each act as charge relay system in the active site. The Acyl-ester intermediate role is filled by serine 183.

The protein belongs to the amidase family. GatA subfamily. Heterotrimer of A, B and C subunits.

It catalyses the reaction L-glutamyl-tRNA(Gln) + L-glutamine + ATP + H2O = L-glutaminyl-tRNA(Gln) + L-glutamate + ADP + phosphate + H(+). Allows the formation of correctly charged Gln-tRNA(Gln) through the transamidation of misacylated Glu-tRNA(Gln) in organisms which lack glutaminyl-tRNA synthetase. The reaction takes place in the presence of glutamine and ATP through an activated gamma-phospho-Glu-tRNA(Gln). This chain is Glutamyl-tRNA(Gln) amidotransferase subunit A, found in Neorickettsia sennetsu (strain ATCC VR-367 / Miyayama) (Ehrlichia sennetsu).